The primary structure comprises 166 residues: Large ribosomal subunit protein uL10 (166 aa).

Belongs to the universal ribosomal protein uL10 family. As to quaternary structure, part of the ribosomal stalk of the 50S ribosomal subunit. The N-terminus interacts with L11 and the large rRNA to form the base of the stalk. The C-terminus forms an elongated spine to which L12 dimers bind in a sequential fashion forming a multimeric L10(L12)X complex.

Functionally, forms part of the ribosomal stalk, playing a central role in the interaction of the ribosome with GTP-bound translation factors. The polypeptide is Large ribosomal subunit protein uL10 (Shewanella sediminis (strain HAW-EB3)).